The primary structure comprises 580 residues: E3 ubiquitin-protein ligase TRIM45 (580 aa).

Residues 29–98 (CPLCMGLFKA…QIGILCPVCD (70 aa)) form an RING-type zinc finger. 2 B box-type zinc fingers span residues 130–176 (GQGL…MVDL) and 186–227 (GKPI…CDFT). Zn(2+) is bound by residues C135, C138, C158, H162, C191, H194, C214, and H219. Residues 281 to 335 (SEGYIKAIEEHRDKLLKQLEDIRVQKENSLQLQKAQLEQLLADMRTGVEFTEHLL) adopt a coiled-coil conformation. The stretch at 394–497 (TKEVDPAKCV…VQGSPFTVTV (104 aa)) is one Filamin repeat.

It belongs to the TRIM/RBCC family.

The protein resides in the cytoplasm. Its subcellular location is the nucleus. It carries out the reaction S-ubiquitinyl-[E2 ubiquitin-conjugating enzyme]-L-cysteine + [acceptor protein]-L-lysine = [E2 ubiquitin-conjugating enzyme]-L-cysteine + N(6)-ubiquitinyl-[acceptor protein]-L-lysine.. In terms of biological role, E3 ubiquitin-protein ligase that plays a role in the regulation of inflammatory response. Mechanistically, mediates the 'Lys-48'-linked polyubiquitination of TAB2, a regulatory protein of the kinase TAK1, leading to its degradation via the proteasomal pathway and inhibition of the TLR-mediated inflammatory immune response. May act as a transcriptional repressor in mitogen-activated protein kinase signaling pathway. The polypeptide is E3 ubiquitin-protein ligase TRIM45 (TRIM45) (Bos taurus (Bovine)).